The sequence spans 107 residues: Integration host factor subunit alpha (107 aa).

This sequence belongs to the bacterial histone-like protein family. In terms of assembly, heterodimer of an alpha and a beta chain.

This protein is one of the two subunits of integration host factor, a specific DNA-binding protein that functions in genetic recombination as well as in transcriptional and translational control. This Brucella abortus (strain S19) protein is Integration host factor subunit alpha.